Here is a 358-residue protein sequence, read N- to C-terminus: UPF0575 protein C19orf67 (358 aa).

The interval 1–84 is disordered; sequence MATEQWFEGS…PGPAPPRLSL (84 aa). Composition is skewed to pro residues over residues 17–32 and 70–80; these read ETPP…PPCG and PLVPRPGPAPP.

The protein belongs to the UPF0575 family.

The polypeptide is UPF0575 protein C19orf67 (C19orf67) (Homo sapiens (Human)).